Consider the following 194-residue polypeptide: Adenylate kinase isoenzyme 1 (194 aa).

At M1 the chain carries N-acetylmethionine. 18 to 23 (GSGKGT) provides a ligand contact to ATP. The residue at position 38 (S38) is a Phosphoserine. Residues 38 to 67 (STGDLLRAEVSSGSSRGKMLSSIMEKGELV) form an NMP region. AMP is bound by residues T39, R44, 65 to 67 (ELV), 94 to 97 (GYPR), and Q101. Positions 131 to 141 (KRGETSGRVDD) are LID. R132 is a binding site for ATP. AMP contacts are provided by R138 and R149. Residue G177 participates in ATP binding.

It belongs to the adenylate kinase family. AK1 subfamily. As to quaternary structure, monomer. It depends on Mg(2+) as a cofactor.

The protein resides in the cytoplasm. The catalysed reaction is a ribonucleoside 5'-phosphate + ATP = a ribonucleoside 5'-diphosphate + ADP. The enzyme catalyses AMP + ATP = 2 ADP. It carries out the reaction dAMP + ATP = dADP + ADP. It catalyses the reaction dATP + AMP = dADP + ADP. The catalysed reaction is dAMP + dATP = 2 dADP. The enzyme catalyses a 2'-deoxyribonucleoside 5'-diphosphate + ATP = a 2'-deoxyribonucleoside 5'-triphosphate + ADP. It carries out the reaction a ribonucleoside 5'-diphosphate + ATP = a ribonucleoside 5'-triphosphate + ADP. It catalyses the reaction CDP + GTP = CTP + GDP. The catalysed reaction is GDP + ATP = GTP + ADP. The enzyme catalyses UDP + ATP = UTP + ADP. It carries out the reaction GTP + UDP = UTP + GDP. It catalyses the reaction dTDP + GTP = dTTP + GDP. The catalysed reaction is dCDP + GTP = dCTP + GDP. The enzyme catalyses dGDP + ATP = dGTP + ADP. It carries out the reaction dADP + GTP = dATP + GDP. It catalyses the reaction thiamine diphosphate + ADP = thiamine triphosphate + AMP. Its function is as follows. Catalyzes the reversible transfer of the terminal phosphate group between ATP and AMP. Also displays broad nucleoside diphosphate kinase activity. Plays an important role in cellular energy homeostasis and in adenine nucleotide metabolism. Also catalyzes at a very low rate the synthesis of thiamine triphosphate (ThTP) from thiamine diphosphate (ThDP) and ADP. The protein is Adenylate kinase isoenzyme 1 (Ak1) of Rattus norvegicus (Rat).